The chain runs to 385 residues: Phosphatidate cytidylyltransferase, mitochondrial (385 aa).

Belongs to the TAM41 family. Mg(2+) is required as a cofactor. Requires Co(2+) as cofactor. It depends on Cu(2+) as a cofactor.

The protein localises to the mitochondrion inner membrane. It catalyses the reaction a 1,2-diacyl-sn-glycero-3-phosphate + CTP + H(+) = a CDP-1,2-diacyl-sn-glycerol + diphosphate. The protein operates within phospholipid metabolism; CDP-diacylglycerol biosynthesis; CDP-diacylglycerol from sn-glycerol 3-phosphate: step 3/3. In terms of biological role, catalyzes the formation of CDP-diacylglycerol (CDP-DAG) from phosphatidic acid (PA) in the mitochondrial inner membrane. Required for the biosynthesis of the dimeric phospholipid cardiolipin, which stabilizes supercomplexes of the mitochondrial respiratory chain in the mitochondrial inner membrane. This is Phosphatidate cytidylyltransferase, mitochondrial (TAM41) from Saccharomyces cerevisiae (strain ATCC 204508 / S288c) (Baker's yeast).